Reading from the N-terminus, the 516-residue chain is NAD(P)H-quinone oxidoreductase chain 4, chloroplastic (516 aa).

A run of 14 helical transmembrane segments spans residues 4–24 (FPWL…IFLL), 37–57 (LCIC…HFQL), 87–107 (IGPI…AWPV), 111–131 (AQLF…SFSS), 134–154 (LLLF…LLSM), 167–187 (FILY…GIGL), 208–228 (ALEV…LPII), 242–262 (HYST…YGLV), 272–292 (AHCL…IYAA), 305–325 (IAYS…SLSD), 330–350 (GAIL…FLAG), 386–406 (LALP…GIIT), 416–436 (ILIA…SLSM), and 462–482 (LFVS…PDFV).

It belongs to the complex I subunit 4 family.

It localises to the plastid. Its subcellular location is the chloroplast thylakoid membrane. The catalysed reaction is a plastoquinone + NADH + (n+1) H(+)(in) = a plastoquinol + NAD(+) + n H(+)(out). It carries out the reaction a plastoquinone + NADPH + (n+1) H(+)(in) = a plastoquinol + NADP(+) + n H(+)(out). The sequence is that of NAD(P)H-quinone oxidoreductase chain 4, chloroplastic from Oenothera argillicola (Appalachian evening primrose).